The primary structure comprises 373 residues: NADPH-dependent 3-keto-steroid reductase Hsd3b5 (373 aa).

NADP(+)-binding positions include 10 to 15 (GAGGFL), Tyr-155, and Lys-159. The active-site Proton donor is Lys-159. The helical transmembrane segment at 288–308 (LSLLYWLAFLLETVSFLLRPV) threads the bilayer. At Lys-350 the chain carries N6-acetyllysine.

It belongs to the 3-beta-HSD family. Expressed in the male liver, starting in late puberty.

The protein resides in the endoplasmic reticulum membrane. The protein localises to the mitochondrion membrane. The enzyme catalyses a 3beta-hydroxysteroid + NADP(+) = a 3-oxosteroid + NADPH + H(+). It catalyses the reaction 5alpha-androstane-3beta,17beta-diol + NADP(+) = 17beta-hydroxy-5alpha-androstan-3-one + NADPH + H(+). Its pathway is steroid metabolism. In terms of biological role, responsible for the reduction of the oxo group on the C-3 of 5alpha-androstane steroids. Catalyzes the conversion of dihydrotestosterone to its inactive form 5alpha-androstanediol, that does not bind androgen receptor/AR. Does not function as an isomerase. The chain is NADPH-dependent 3-keto-steroid reductase Hsd3b5 from Mus musculus (Mouse).